A 423-amino-acid polypeptide reads, in one-letter code: Lipoyl synthase 1, mitochondrial (423 aa).

Cys-127, Cys-132, Cys-138, Cys-159, Cys-163, Cys-166, and Ser-375 together coordinate [4Fe-4S] cluster. In terms of domain architecture, Radical SAM core spans 142–364 (DEEEGTATAT…EEEAMAMGFL (223 aa)).

This sequence belongs to the radical SAM superfamily. Lipoyl synthase family. It depends on [4Fe-4S] cluster as a cofactor.

Its subcellular location is the mitochondrion. It catalyses the reaction [[Fe-S] cluster scaffold protein carrying a second [4Fe-4S](2+) cluster] + N(6)-octanoyl-L-lysyl-[protein] + 2 oxidized [2Fe-2S]-[ferredoxin] + 2 S-adenosyl-L-methionine + 4 H(+) = [[Fe-S] cluster scaffold protein] + N(6)-[(R)-dihydrolipoyl]-L-lysyl-[protein] + 4 Fe(3+) + 2 hydrogen sulfide + 2 5'-deoxyadenosine + 2 L-methionine + 2 reduced [2Fe-2S]-[ferredoxin]. It participates in protein modification; protein lipoylation via endogenous pathway; protein N(6)-(lipoyl)lysine from octanoyl-[acyl-carrier-protein]: step 2/2. Functionally, catalyzes the radical-mediated insertion of two sulfur atoms into the C-6 and C-8 positions of the octanoyl moiety bound to the lipoyl domains of lipoate-dependent enzymes, thereby converting the octanoylated domains into lipoylated derivatives. The protein is Lipoyl synthase 1, mitochondrial of Trypanosoma cruzi (strain CL Brener).